The sequence spans 545 residues: Chaperonin GroEL (545 aa).

Residues 29–32 (TLGP), 86–90 (DGTTT), G413, 476–478 (NAA), and D492 contribute to the ATP site.

This sequence belongs to the chaperonin (HSP60) family. Forms a cylinder of 14 subunits composed of two heptameric rings stacked back-to-back. Interacts with the co-chaperonin GroES.

It is found in the cytoplasm. It carries out the reaction ATP + H2O + a folded polypeptide = ADP + phosphate + an unfolded polypeptide.. In terms of biological role, together with its co-chaperonin GroES, plays an essential role in assisting protein folding. The GroEL-GroES system forms a nano-cage that allows encapsulation of the non-native substrate proteins and provides a physical environment optimized to promote and accelerate protein folding. This is Chaperonin GroEL from Shouchella clausii (strain KSM-K16) (Alkalihalobacillus clausii).